The sequence spans 153 residues: Ribosome maturation factor RimP (153 aa).

It belongs to the RimP family.

It is found in the cytoplasm. In terms of biological role, required for maturation of 30S ribosomal subunits. The sequence is that of Ribosome maturation factor RimP from Picosynechococcus sp. (strain ATCC 27264 / PCC 7002 / PR-6) (Agmenellum quadruplicatum).